Consider the following 1798-residue polypeptide: Laminin subunit beta-2 (1798 aa).

The first 32 residues, 1 to 32, serve as a signal peptide directing secretion; it reads MELTSRERGRGQPLPWELRLGLLLSVLAATLA. The Laminin N-terminal domain maps to 43–282; sequence SRGSCYPATG…ALYELVVRGN (240 aa). N-linked (GlcNAc...) asparagine glycosylation occurs at Asn248. Intrachain disulfides connect Cys283-Cys292, Cys285-Cys310, Cys312-Cys321, Cys324-Cys344, Cys347-Cys356, Cys349-Cys374, Cys377-Cys386, Cys389-Cys407, Cys410-Cys423, Cys412-Cys438, Cys440-Cys449, Cys452-Cys467, Cys470-Cys484, Cys472-Cys491, Cys493-Cys502, Cys505-Cys519, Cys522-Cys534, Cys524-Cys541, and Cys543-Cys552. Laminin EGF-like domains are found at residues 283 to 346, 347 to 409, 410 to 469, and 470 to 521; these read CFCY…ACRK, CECH…VCRS, CDCD…GCRR, and CQCN…GCRP. Asn368 is a glycosylation site (N-linked (GlcNAc...) asparagine). A Laminin EGF-like 5; truncated domain is found at 522–552; sequence CDCDVGGALDPQCDEGTGQCHCRQHMVGRRC. The 217-residue stretch at 561–777 folds into the Laminin IV type B domain; it reads RPFLDHLIWE…LLISLSTLIY (217 aa). Cystine bridges form between Cys783-Cys795, Cys785-Cys802, Cys804-Cys813, Cys816-Cys828, Cys831-Cys843, Cys833-Cys850, Cys852-Cys861, Cys864-Cys874, Cys877-Cys886, Cys879-Cys893, Cys896-Cys905, Cys908-Cys924, Cys927-Cys943, Cys929-Cys954, Cys956-Cys965, Cys968-Cys983, Cys986-Cys1000, Cys988-Cys1007, Cys1010-Cys1019, Cys1022-Cys1035, Cys1038-Cys1058, Cys1040-Cys1065, Cys1067-Cys1076, Cys1079-Cys1092, Cys1095-Cys1107, Cys1097-Cys1114, Cys1116-Cys1125, Cys1128-Cys1140, Cys1143-Cys1155, Cys1145-Cys1162, Cys1164-Cys1173, and Cys1176-Cys1187. 8 Laminin EGF-like domains span residues 783 to 830, 831 to 876, 877 to 926, 927 to 985, 986 to 1037, 1038 to 1094, 1095 to 1142, and 1143 to 1189; these read CQCN…GCQA, CQCS…SCRP, CVCN…QCRP, CPCP…RCQL, CECS…SCHR, CTCN…GCQP, CACH…QCHA, and CDCD…ACHP. An N-linked (GlcNAc...) asparagine glycan is attached at Asn1085. The tract at residues 1190-1409 is domain II; sequence CHACFGDWDR…LSLTDINELV (220 aa). N-linked (GlcNAc...) asparagine glycosylation is found at Asn1249, Asn1308, and Asn1348. Residues 1253–1319 are a coiled coil; sequence ASTAQLVEAT…TLRQLDQHLD (67 aa). The segment at 1338-1364 is disordered; the sequence is SQSAEAERRANTSALAVPSPVSNSASA. Over residues 1350-1363 the composition is skewed to low complexity; it reads SALAVPSPVSNSAS. The tract at residues 1410–1442 is domain alpha; sequence CGAPGDAPCATSPCGGAGCRDEDGQPRCGGLSC. Positions 1443–1798 are domain I; that stretch reads NGAAATADLA…LQVQIYNTCQ (356 aa). Positions 1472–1526 form a coiled coil; sequence SILSRVAETRRQASEAQQRAQAALDKANASRGQVEQANQELQELIQSVKDFLNQE. An N-linked (GlcNAc...) asparagine glycan is attached at Asn1499. Position 1532 is a phosphoserine; by FAM20C (Ser1532). Residues 1577 to 1790 are a coiled coil; sequence VGDVRRAEQL…RSVLQAINLQ (214 aa).

As to quaternary structure, laminin is a complex glycoprotein, consisting of three different polypeptide chains (alpha, beta, gamma), which are bound to each other by disulfide bonds into a cross-shaped molecule comprising one long and three short arms with globules at each end. Beta-2 is a subunit of laminin-3 (laminin-121 or S-laminin), laminin-4 (laminin-221 or S-merosin), laminin-7 (laminin-321 or KS-laminin), laminin-9 (laminin-421), laminin-11 (laminin-521), laminin-14 (laminin-423) and laminin-15 (laminin-523).

It localises to the secreted. The protein resides in the extracellular space. Its subcellular location is the extracellular matrix. It is found in the basement membrane. Its function is as follows. Binding to cells via a high affinity receptor, laminin is thought to mediate the attachment, migration and organization of cells into tissues during embryonic development by interacting with other extracellular matrix components. This chain is Laminin subunit beta-2 (LAMB2), found in Homo sapiens (Human).